A 210-amino-acid polypeptide reads, in one-letter code: Large ribosomal subunit protein uL3 (210 aa).

The tract at residues 126–152 (HGFRGGPKTHGQSDRHRAPGSIGAGTT) is disordered.

This sequence belongs to the universal ribosomal protein uL3 family. As to quaternary structure, part of the 50S ribosomal subunit. Forms a cluster with proteins L14 and L19.

Functionally, one of the primary rRNA binding proteins, it binds directly near the 3'-end of the 23S rRNA, where it nucleates assembly of the 50S subunit. This is Large ribosomal subunit protein uL3 from Chloroflexus aurantiacus (strain ATCC 29366 / DSM 635 / J-10-fl).